The chain runs to 293 residues: Ankyrin repeat and SOCS box protein 11 (293 aa).

ANK repeat units lie at residues 36 to 65 (DDRTPLHDAALQGRLLPLRRLLSQGYNVGM), 69 to 98 (DGITALHEACVGGHFTCAKLLLEHGADANA), 102 to 131 (DGATPLFSACCSGNPALVSLILTHSSAHHP), 134 to 163 (LLCSPLHEAAKRGHTACVELLLSHGVNVDM), 167 to 196 (SVGTALYCACEVKSTDCVLTLLILGADVQC), 199 to 228 (GLDTPLHAACRVGGAKEAELLLEHGADRTS), and 232 to 259 (EGKTPLDLTSDQSIKHLLQTAGTCSLSQ). An SOCS box domain is found at 244–293 (SIKHLLQTAGTCSLSQLCRWCIRRSLGQKGLNKTKTLCLPHMLHNYLLYH).

It belongs to the ankyrin SOCS box (ASB) family. As to quaternary structure, substrate-recognition component of the ECS(ASB11) complex, composed of asb11, cul5, elob, eloc and rnf7/rbx2. In terms of tissue distribution, expressed in the developing nervous system: localizes to neural plate margins and is abutting the proneuronal zone.

The protein localises to the endoplasmic reticulum. Its pathway is protein modification; protein ubiquitination. Functionally, substrate-recognition component of a cullin-5-RING E3 ubiquitin-protein ligase complex (ECS complex, also named CRL5 complex), which mediates the ubiquitination and subsequent proteasomal degradation of target proteins. Acts as a regulator of the neuronal progenitor compartment size by maintaining the neural precursors in the proliferating undifferentiated state. The ECS(ASB11) complex acts as a positive regulator of Notch signaling pathway by mediating ubiquitination and degradation of DeltaA (dla). Also acts as a regulator of regenerative myogenesis. This Danio rerio (Zebrafish) protein is Ankyrin repeat and SOCS box protein 11.